A 289-amino-acid chain; its full sequence is MTKKLWFLPIVCLFFILGWTAPSASAGAPADTNLYSRLAVSTAGGTTLFPQTSSAVITPSADTETYYKEASGKSGTALKSALHRIISGHTKLSYSQVWNALKETDEDPANPNNVILLYTQESRAKSKNGGSVGDWNREHVWAKSHGNFGTAAGPGTDIHHLRPADVQVNSARGNMDFDNGGSEYPKAPGNYYDGDSWEPRDEVKGDVARMLFYMAVRYEGGDGYPDLELNDKTGNGSAPYMGKLSVLLKWNKQDPVDSKEKRRNEIIYEDYQHNRNPFIDHPEWADEIW.

Residues methionine 1–alanine 24 form the signal peptide. Residues serine 25–glutamine 51 constitute a propeptide that is removed on maturation. The tract at residues phenylalanine 177–tryptophan 197 is disordered.

Its subcellular location is the secreted. Its function is as follows. Mg(2+)-activated ribonuclease which hydrolyzes RNA apparently nonspecifically into oligonucleotides with 5'-terminal phosphate. This chain is Extracellular ribonuclease (bsn), found in Bacillus amyloliquefaciens (Bacillus velezensis).